A 345-amino-acid chain; its full sequence is Phosphoribosylformylglycinamidine cyclo-ligase (345 aa).

It belongs to the AIR synthase family.

It localises to the cytoplasm. It carries out the reaction 2-formamido-N(1)-(5-O-phospho-beta-D-ribosyl)acetamidine + ATP = 5-amino-1-(5-phospho-beta-D-ribosyl)imidazole + ADP + phosphate + H(+). It participates in purine metabolism; IMP biosynthesis via de novo pathway; 5-amino-1-(5-phospho-D-ribosyl)imidazole from N(2)-formyl-N(1)-(5-phospho-D-ribosyl)glycinamide: step 2/2. The chain is Phosphoribosylformylglycinamidine cyclo-ligase from Anaeromyxobacter dehalogenans (strain 2CP-1 / ATCC BAA-258).